The chain runs to 436 residues: Glutamyl-tRNA reductase (436 aa).

Substrate contacts are provided by residues 49 to 52 (TCNR), S109, 114 to 116 (EPQ), and Q120. C50 serves as the catalytic Nucleophile. NADP(+) is bound at residue 189-194 (GAGEMC).

Belongs to the glutamyl-tRNA reductase family. In terms of assembly, homodimer.

It carries out the reaction (S)-4-amino-5-oxopentanoate + tRNA(Glu) + NADP(+) = L-glutamyl-tRNA(Glu) + NADPH + H(+). The protein operates within porphyrin-containing compound metabolism; protoporphyrin-IX biosynthesis; 5-aminolevulinate from L-glutamyl-tRNA(Glu): step 1/2. Catalyzes the NADPH-dependent reduction of glutamyl-tRNA(Glu) to glutamate 1-semialdehyde (GSA). This chain is Glutamyl-tRNA reductase, found in Pelobacter propionicus (strain DSM 2379 / NBRC 103807 / OttBd1).